We begin with the raw amino-acid sequence, 118 residues long: Large ribosomal subunit protein uL22 (118 aa).

This sequence belongs to the universal ribosomal protein uL22 family. Part of the 50S ribosomal subunit.

In terms of biological role, this protein binds specifically to 23S rRNA; its binding is stimulated by other ribosomal proteins, e.g. L4, L17, and L20. It is important during the early stages of 50S assembly. It makes multiple contacts with different domains of the 23S rRNA in the assembled 50S subunit and ribosome. Functionally, the globular domain of the protein is located near the polypeptide exit tunnel on the outside of the subunit, while an extended beta-hairpin is found that lines the wall of the exit tunnel in the center of the 70S ribosome. The protein is Large ribosomal subunit protein uL22 of Synechococcus sp. (strain RCC307).